The following is a 364-amino-acid chain: MSVLAAIAVLAVLILVHELGHFVAARSQGIHVNRFSLGFGPVLWKYQGAETEYAIRAFPLGGFVGFPDDDPDSDIPPNDPNLLRNRPILDRAIVISAGVIANLIFAYMLLLAQVGFVGIGQASQPGVSIQQLAPEVSAVATNAGLKPGDVILSANQKEFGTSLQEIEALRDIIKNSPGKSIQLTVARGDERLSVNVIPEAKPAGGSIGIGLAPNGKVERRPVSLSKAFSVGASEFQRIVVMTFKGFGQLVTNFGETASQVAGPIKIVEIGANIAQNDTGSLFFFAALISINLAVINILPLPALDGGQLAFLLIEGLRGKPLPNRIQEGVMQTGLVLLLGLGIFLIVKETTQLTTQLEWVQKLFQ.

Histidine 17 lines the Zn(2+) pocket. Glutamate 18 is an active-site residue. Residue histidine 21 coordinates Zn(2+). 3 helical membrane passes run 92 to 114, 281 to 303, and 329 to 346; these read AIVI…LAQV, LFFF…LPAL, and VMQT…FLIV. The PDZ domain occupies 103–188; it reads LIFAYMLLLA…KSIQLTVARG (86 aa).

The protein belongs to the peptidase M50B family. Requires Zn(2+) as cofactor.

It is found in the cell inner membrane. This chain is Putative zinc metalloprotease all3971, found in Nostoc sp. (strain PCC 7120 / SAG 25.82 / UTEX 2576).